A 134-amino-acid chain; its full sequence is ATP synthase epsilon chain (134 aa).

Residues 94-104 (AKLAKSRAESH) show a composition bias toward basic and acidic residues. The interval 94–115 (AKLAKSRAESHLEDDDDNTDIN) is disordered.

The protein belongs to the ATPase epsilon chain family. As to quaternary structure, F-type ATPases have 2 components, CF(1) - the catalytic core - and CF(0) - the membrane proton channel. CF(1) has five subunits: alpha(3), beta(3), gamma(1), delta(1), epsilon(1). CF(0) has three main subunits: a, b and c.

It localises to the cell membrane. Produces ATP from ADP in the presence of a proton gradient across the membrane. The sequence is that of ATP synthase epsilon chain from Staphylococcus epidermidis (strain ATCC 12228 / FDA PCI 1200).